We begin with the raw amino-acid sequence, 106 residues long: uncharacterized protein (106 aa).

The protein belongs to the HesB/IscA family.

This is an uncharacterized protein from Sinorhizobium fredii (strain NBRC 101917 / NGR234).